We begin with the raw amino-acid sequence, 282 residues long: Secretory carrier-associated membrane protein 1 (282 aa).

A disordered region spans residues 1–49 (MSRYQSHSFDDGEINPFANPTSVPAATSKLSPLPPEPYDRGATMDIPLD). Over 1 to 117 (MSRYQSHSFD…EIPIHLQRIQ (117 aa)) the chain is Cytoplasmic. A compositionally biased stretch (polar residues) spans 18-30 (ANPTSVPAATSKL). Serine 31 carries the post-translational modification Phosphoserine. A coiled-coil region spans residues 48 to 93 (LDSGKDLKAKEKELREKEAELKRREQEIKRKEDAIAQAGIVIEEKN). 4 helical membrane passes run 118–138 (YVAFTSMLGLVVCLLWNIVAV), 150–170 (IWFLAIIYFISGVPGAYVMWY), 185–205 (FGWFFFTYLFHIAFCVFAAVA), and 233–253 (IFYFIGFGFFCLESLVSIWVI). Topologically, residues 254 to 282 (QQVYMYFRGSGKAAEMKQEATRRAMMAAL) are cytoplasmic.

Belongs to the SCAMP family.

It is found in the cell membrane. Its subcellular location is the cytoplasmic vesicle. The protein resides in the secretory vesicle membrane. Functionally, probably involved in membrane trafficking. The sequence is that of Secretory carrier-associated membrane protein 1 (SCAMP1) from Arabidopsis thaliana (Mouse-ear cress).